The primary structure comprises 702 residues: Phosphoglycerol transferase I (702 aa).

Helical transmembrane passes span 2–22 (HWIL…SPRL), 71–91 (FSGY…PLML), and 103–123 (GGAV…VSPV).

The protein belongs to the OpgB family.

It is found in the cell inner membrane. The enzyme catalyses a phosphatidylglycerol + a membrane-derived-oligosaccharide D-glucose = a 1,2-diacyl-sn-glycerol + a membrane-derived-oligosaccharide 6-(glycerophospho)-D-glucose.. It participates in glycan metabolism; osmoregulated periplasmic glucan (OPG) biosynthesis. Transfers a phosphoglycerol residue from phosphatidylglycerol to the membrane-bound nascent glucan backbones. This chain is Phosphoglycerol transferase I, found in Xanthomonas campestris pv. campestris (strain B100).